A 314-amino-acid polypeptide reads, in one-letter code: Ribosomal RNA small subunit methyltransferase H (314 aa).

S-adenosyl-L-methionine is bound by residues 36–38 (GGH), Asp56, Phe83, Asp104, and Gln111.

The protein belongs to the methyltransferase superfamily. RsmH family.

It is found in the cytoplasm. It carries out the reaction cytidine(1402) in 16S rRNA + S-adenosyl-L-methionine = N(4)-methylcytidine(1402) in 16S rRNA + S-adenosyl-L-homocysteine + H(+). In terms of biological role, specifically methylates the N4 position of cytidine in position 1402 (C1402) of 16S rRNA. The sequence is that of Ribosomal RNA small subunit methyltransferase H from Syntrophotalea carbinolica (strain DSM 2380 / NBRC 103641 / GraBd1) (Pelobacter carbinolicus).